A 188-amino-acid chain; its full sequence is MKISANSIRTGNILVYNNDLWVVSKTPEHTQPGKGGAYVQVEMKNLKTGTKRNARFSSSDYLEKAELEQKDYQFLYFEGDDLVLMDTKHFDQINIPKEMLEEKLSFLTENMIVKVEFYNDKPLNIELLPTVILEISETDPVIKGATATASYKPAILENGIKVKVPQYLEIGEKIVVKTDDMTYVERAK.

This sequence belongs to the elongation factor P family.

Its subcellular location is the cytoplasm. It participates in protein biosynthesis; polypeptide chain elongation. Its function is as follows. Involved in peptide bond synthesis. Stimulates efficient translation and peptide-bond synthesis on native or reconstituted 70S ribosomes in vitro. Probably functions indirectly by altering the affinity of the ribosome for aminoacyl-tRNA, thus increasing their reactivity as acceptors for peptidyl transferase. This chain is Elongation factor P, found in Rickettsia massiliae (strain Mtu5).